A 20-amino-acid chain; its full sequence is ATDYEDEEFPGAVPPSVGAR.

The tract at residues 1–20 (ATDYEDEEFPGAVPPSVGAR) is disordered. The O-linked (GalNAc...) threonine glycan is linked to T2. A Sulfotyrosine modification is found at Y4.

As to quaternary structure, heterohexamer; disulfide linked. Contains 2 sets of 3 non-identical chains (alpha, beta and gamma). The 2 heterotrimers are in head to head conformation with the N-termini in a small central domain. Conversion of fibrinogen to fibrin is triggered by thrombin, which cleaves fibrinopeptides A and B from alpha and beta chains, and thus exposes the N-terminal polymerization sites responsible for the formation of the soft clot.

The protein localises to the secreted. In terms of biological role, cleaved by the protease thrombin to yield monomers which, together with fibrinogen alpha (FGA) and fibrinogen gamma (FGG), polymerize to form an insoluble fibrin matrix. Fibrin has a major function in hemostasis as one of the primary components of blood clots. In addition, functions during the early stages of wound repair to stabilize the lesion and guide cell migration during re-epithelialization. Was originally thought to be essential for platelet aggregation, based on in vitro studies using anticoagulated blood. However subsequent studies have shown that it is not absolutely required for thrombus formation in vivo. Enhances expression of SELP in activated platelets. Maternal fibrinogen is essential for successful pregnancy. Fibrin deposition is also associated with infection, where it protects against IFNG-mediated hemorrhage. May also facilitate the antibacterial immune response via both innate and T-cell mediated pathways. This Elephas maximus (Indian elephant) protein is Fibrinogen beta chain (FGB).